We begin with the raw amino-acid sequence, 81 residues long: MKLVLAIVLILMFLSLSAGAETSDNGVSRGGHRPQYWPVTPPSIVCLRSGEDCENNTPCCPGLSCRVSADLATLKLSLACD.

Residues 1–19 (MKLVLAIVLILMFLSLSAG) form the signal peptide. A propeptide spanning residues 20–42 (AETSDNGVSRGGHRPQYWPVTPP) is cleaved from the precursor. Cystine bridges form between cysteine 46/cysteine 60, cysteine 53/cysteine 65, and cysteine 59/cysteine 80.

It belongs to the conotoxin I3 superfamily. In terms of tissue distribution, expressed by the venom duct.

The protein localises to the secreted. In Conus litteratus (Lettered cone), this protein is Conotoxin Lt6.4.